A 387-amino-acid polypeptide reads, in one-letter code: Alkanesulfonate monooxygenase (387 aa).

The protein belongs to the SsuD family.

The catalysed reaction is an alkanesulfonate + FMNH2 + O2 = an aldehyde + FMN + sulfite + H2O + 2 H(+). Its function is as follows. Catalyzes the desulfonation of aliphatic sulfonates. In Ralstonia pickettii (strain 12J), this protein is Alkanesulfonate monooxygenase.